Reading from the N-terminus, the 233-residue chain is 7-cyano-7-deazaguanine synthase 2 (233 aa).

8-18 (LSGGLDSTTCM) contributes to the ATP binding site. Positions 186, 194, 197, and 200 each coordinate Zn(2+).

It belongs to the QueC family. As to quaternary structure, homodimer. Zn(2+) serves as cofactor.

The catalysed reaction is 7-carboxy-7-deazaguanine + NH4(+) + ATP = 7-cyano-7-deazaguanine + ADP + phosphate + H2O + H(+). The protein operates within purine metabolism; 7-cyano-7-deazaguanine biosynthesis. Its function is as follows. Catalyzes the ATP-dependent conversion of 7-carboxy-7-deazaguanine (CDG) to 7-cyano-7-deazaguanine (preQ(0)). The protein is 7-cyano-7-deazaguanine synthase 2 of Desulfitobacterium hafniense (strain Y51).